The following is a 284-amino-acid chain: Pantothenate synthetase (284 aa).

30–37 (MGNLHDGH) lines the ATP pocket. Catalysis depends on histidine 37, which acts as the Proton donor. A (R)-pantoate-binding site is contributed by glutamine 61. Residue glutamine 61 coordinates beta-alanine. 149 to 152 (GEKD) contributes to the ATP binding site. Glutamine 155 lines the (R)-pantoate pocket. Residues isoleucine 178 and 186 to 189 (LSSR) each bind ATP.

The protein belongs to the pantothenate synthetase family. As to quaternary structure, homodimer.

It is found in the cytoplasm. It catalyses the reaction (R)-pantoate + beta-alanine + ATP = (R)-pantothenate + AMP + diphosphate + H(+). It participates in cofactor biosynthesis; (R)-pantothenate biosynthesis; (R)-pantothenate from (R)-pantoate and beta-alanine: step 1/1. Its function is as follows. Catalyzes the condensation of pantoate with beta-alanine in an ATP-dependent reaction via a pantoyl-adenylate intermediate. The sequence is that of Pantothenate synthetase from Salmonella choleraesuis (strain SC-B67).